Consider the following 469-residue polypeptide: Uronate isomerase (469 aa).

It belongs to the metallo-dependent hydrolases superfamily. Uronate isomerase family.

It catalyses the reaction D-glucuronate = D-fructuronate. The catalysed reaction is aldehydo-D-galacturonate = keto-D-tagaturonate. Its pathway is carbohydrate metabolism; pentose and glucuronate interconversion. This Mesorhizobium japonicum (strain LMG 29417 / CECT 9101 / MAFF 303099) (Mesorhizobium loti (strain MAFF 303099)) protein is Uronate isomerase.